The following is a 719-amino-acid chain: Fatty acid oxidation complex subunit alpha (719 aa).

Positions 1–190 (MVYQGNRITV…KLGLVDATVA (190 aa)) are enoyl-CoA hydratase/isomerase. Position 298 (Asp298) interacts with substrate. The 3-hydroxyacyl-CoA dehydrogenase stretch occupies residues 313-719 (HEINEAAVLG…AAGETFYATA (407 aa)). NAD(+)-binding positions include Met326, Asp345, 402-404 (VVE), Lys409, and Ser431. The active-site For 3-hydroxyacyl-CoA dehydrogenase activity is His452. Asn455 serves as a coordination point for NAD(+). Substrate is bound at residue Asn502.

In the N-terminal section; belongs to the enoyl-CoA hydratase/isomerase family. It in the C-terminal section; belongs to the 3-hydroxyacyl-CoA dehydrogenase family. As to quaternary structure, heterotetramer of two alpha chains (FadB) and two beta chains (FadA).

It catalyses the reaction a (3S)-3-hydroxyacyl-CoA + NAD(+) = a 3-oxoacyl-CoA + NADH + H(+). The enzyme catalyses a (3S)-3-hydroxyacyl-CoA = a (2E)-enoyl-CoA + H2O. It carries out the reaction a 4-saturated-(3S)-3-hydroxyacyl-CoA = a (3E)-enoyl-CoA + H2O. The catalysed reaction is (3S)-3-hydroxybutanoyl-CoA = (3R)-3-hydroxybutanoyl-CoA. It catalyses the reaction a (3Z)-enoyl-CoA = a 4-saturated (2E)-enoyl-CoA. The enzyme catalyses a (3E)-enoyl-CoA = a 4-saturated (2E)-enoyl-CoA. The protein operates within lipid metabolism; fatty acid beta-oxidation. Functionally, involved in the aerobic and anaerobic degradation of long-chain fatty acids via beta-oxidation cycle. Catalyzes the formation of 3-oxoacyl-CoA from enoyl-CoA via L-3-hydroxyacyl-CoA. It can also use D-3-hydroxyacyl-CoA and cis-3-enoyl-CoA as substrate. In Psychrobacter arcticus (strain DSM 17307 / VKM B-2377 / 273-4), this protein is Fatty acid oxidation complex subunit alpha.